Here is a 309-residue protein sequence, read N- to C-terminus: HPr kinase/phosphorylase (309 aa).

Active-site residues include His138 and Lys159. 153 to 160 (GDSGIGKS) serves as a coordination point for ATP. Ser160 lines the Mg(2+) pocket. Asp177 functions as the Proton acceptor; for phosphorylation activity. Proton donor; for dephosphorylation activity in the catalytic mechanism. The segment at 201-210 (LEIRGVGIID) is important for the catalytic mechanism of both phosphorylation and dephosphorylation. Glu202 is a Mg(2+) binding site. The active site involves Arg243. Residues 264-269 (PVKTGR) form an important for the catalytic mechanism of dephosphorylation region.

This sequence belongs to the HPrK/P family. As to quaternary structure, homohexamer. Mg(2+) is required as a cofactor.

It catalyses the reaction [HPr protein]-L-serine + ATP = [HPr protein]-O-phospho-L-serine + ADP + H(+). It carries out the reaction [HPr protein]-O-phospho-L-serine + phosphate + H(+) = [HPr protein]-L-serine + diphosphate. Its function is as follows. Catalyzes the ATP- as well as the pyrophosphate-dependent phosphorylation of a specific serine residue in HPr, a phosphocarrier protein of the phosphoenolpyruvate-dependent sugar phosphotransferase system (PTS). HprK/P also catalyzes the pyrophosphate-producing, inorganic phosphate-dependent dephosphorylation (phosphorolysis) of seryl-phosphorylated HPr (P-Ser-HPr). The two antagonistic activities of HprK/P are regulated by several intracellular metabolites, which change their concentration in response to the absence or presence of rapidly metabolisable carbon sources (glucose, fructose, etc.) in the growth medium. Therefore, by controlling the phosphorylation state of HPr, HPrK/P is a sensor enzyme that plays a major role in the regulation of carbon metabolism and sugar transport: it mediates carbon catabolite repression (CCR), and regulates PTS-catalyzed carbohydrate uptake and inducer exclusion. This chain is HPr kinase/phosphorylase, found in Streptococcus thermophilus (strain ATCC BAA-491 / LMD-9).